The chain runs to 577 residues: MSGKIPKYFITELLSRTNIIELINTRLELKKYGKNYQTNCPFHHDKTPSFTVSNEKQFYYCFGCNAHGNAIDFLIQYEHLSFIESIEELALIHGVKIPFENTVQNSIYVKKQKLYLLMEKICKLYKKNINVTHLANKYLARRGINQNMIDFFLIGFSSLKWNEFYKKINISKEFEQELLINNIIATDKNGYIYDRFQGRIIFPIQDNHGRIIGFGGRSLNDMSPKYLNSPETDIFYKRKQIYGLYQVIKKCSKPVYLLVVEGYIDVITLTQYNIDYAVSILGTSTTTEHIQLLFKNTDIIICCYDGDDAGKNAAWKTLKKALPYISDKKTLKFILLPNQEDPDTIIRKEGREKFQKRIDNAITMSKFFFKNILKNINLSSDDDKFHLSVHALPLINTISSDTIRIYLRQILARMIGILDDNQFEKFLYEKETKNTQKTYFQIKRTPMRTLIGLLVQNPSLAKLVPVTMKFKNLQIKGLSIFLEILQTCRDNPNIHTGQLLELYRNTTIINVLKILARWDHMIIQKETQNMFLDLLMNIHDKILEKRREYLIAKERKKGLQMNEKKEIWSINKKLSKR.

A CHC2-type zinc finger spans residues 40–64 (CPFHHDKTPSFTVSNEKQFYYCFGC). Residues 255 to 337 (VYLLVVEGYI…KKTLKFILLP (83 aa)) form the Toprim domain. Mg(2+) is bound by residues Glu-261, Asp-305, and Asp-307.

It belongs to the DnaG primase family. In terms of assembly, monomer. Interacts with DnaB. Zn(2+) serves as cofactor. Mg(2+) is required as a cofactor.

The catalysed reaction is ssDNA + n NTP = ssDNA/pppN(pN)n-1 hybrid + (n-1) diphosphate.. In terms of biological role, RNA polymerase that catalyzes the synthesis of short RNA molecules used as primers for DNA polymerase during DNA replication. This Buchnera aphidicola subsp. Acyrthosiphon pisum (strain APS) (Acyrthosiphon pisum symbiotic bacterium) protein is DNA primase.